The chain runs to 259 residues: UPF0246 protein Pfl01_0961 (259 aa).

The protein belongs to the UPF0246 family.

The chain is UPF0246 protein Pfl01_0961 from Pseudomonas fluorescens (strain Pf0-1).